We begin with the raw amino-acid sequence, 184 residues long: Ribosome-recycling factor (184 aa).

It belongs to the RRF family.

It localises to the cytoplasm. Functionally, responsible for the release of ribosomes from messenger RNA at the termination of protein biosynthesis. May increase the efficiency of translation by recycling ribosomes from one round of translation to another. This Borrelia turicatae (strain 91E135) protein is Ribosome-recycling factor.